Consider the following 398-residue polypeptide: Tryptophan synthase beta chain (398 aa).

Lys88 bears the N6-(pyridoxal phosphate)lysine mark.

The protein belongs to the TrpB family. Tetramer of two alpha and two beta chains. Pyridoxal 5'-phosphate is required as a cofactor.

The enzyme catalyses (1S,2R)-1-C-(indol-3-yl)glycerol 3-phosphate + L-serine = D-glyceraldehyde 3-phosphate + L-tryptophan + H2O. It functions in the pathway amino-acid biosynthesis; L-tryptophan biosynthesis; L-tryptophan from chorismate: step 5/5. In terms of biological role, the beta subunit is responsible for the synthesis of L-tryptophan from indole and L-serine. The protein is Tryptophan synthase beta chain of Histophilus somni (strain 2336) (Haemophilus somnus).